Reading from the N-terminus, the 495-residue chain is Thioredoxin reductase SEP1 (495 aa).

37–54 is an FAD binding site; that stretch reads DFVKPSPPGTTWGLGGTC. Cysteines 54 and 59 form a disulfide. His-468 acts as the Proton acceptor in catalysis. The segment at residues 493–494 is a cross-link (cysteinyl-selenocysteine (Cys-Sec)); sequence CU. Residue Sec-494 is a non-standard amino acid, selenocysteine.

This sequence belongs to the class-I pyridine nucleotide-disulfide oxidoreductase family. Homodimer. FAD is required as a cofactor. In terms of processing, the N-terminus is blocked.

The enzyme catalyses [thioredoxin]-dithiol + NADP(+) = [thioredoxin]-disulfide + NADPH + H(+). Its activity is regulated as follows. Activity was very low in selenium-depleted cells, but increased 4-fold to the same level as in selenium-sufficient cells for 70 hours after the addition of 10 nm selenite. This is Thioredoxin reductase SEP1 (SEP1) from Emiliania huxleyi (Coccolithophore).